The chain runs to 377 residues: tRNA(Met) cytidine acetate ligase (377 aa).

Residues 7–20 (ITEY…HLFH), Gly100, Asn153, and Arg178 each bind ATP.

Belongs to the TmcAL family.

The protein resides in the cytoplasm. It carries out the reaction cytidine(34) in elongator tRNA(Met) + acetate + ATP = N(4)-acetylcytidine(34) in elongator tRNA(Met) + AMP + diphosphate. In terms of biological role, catalyzes the formation of N(4)-acetylcytidine (ac(4)C) at the wobble position of elongator tRNA(Met), using acetate and ATP as substrates. First activates an acetate ion to form acetyladenylate (Ac-AMP) and then transfers the acetyl group to tRNA to form ac(4)C34. This chain is tRNA(Met) cytidine acetate ligase, found in Staphylococcus epidermidis (strain ATCC 35984 / DSM 28319 / BCRC 17069 / CCUG 31568 / BM 3577 / RP62A).